A 393-amino-acid polypeptide reads, in one-letter code: N-acyl-phosphatidylethanolamine-hydrolyzing phospholipase D (393 aa).

The residue at position 1 (M1) is an N-acetylmethionine. Residues 1–16 are compositionally biased toward polar residues; that stretch reads MDENESNQSLMTSSQY. Residues 1 to 40 are disordered; sequence MDENESNQSLMTSSQYPKEAVRKRQNSARNSGASDSSRFS. Residues H185 and H187 each coordinate Zn(2+). Position 188 (Y188) interacts with an N-acyl-1,2-diacyl-sn-glycero-3-phosphoethanolamine. Zn(2+)-binding residues include D189, H190, and H253. Residues K256 and M260 each coordinate deoxycholate. Zn(2+) is bound at residue D284. H321 contributes to the an N-acyl-1,2-diacyl-sn-glycero-3-phosphoethanolamine binding site. H343 contributes to the Zn(2+) binding site. Deoxycholate is bound at residue A348.

The protein belongs to the NAPE-PLD family. Homodimer. Bile acids promote the assembly of inactive monomers into an active dimer and enable catalysis. The cofactor is Zn(2+). As to expression, widely expressed. Highest expression in brain, kidney and testis (at protein level). Expressed in adipose tissue (at protein level).

Its subcellular location is the golgi apparatus membrane. It is found in the early endosome membrane. The protein localises to the nucleus envelope. The protein resides in the nucleus. It localises to the nucleoplasm. The catalysed reaction is an N-acyl-1,2-diacyl-sn-glycero-3-phosphoethanolamine + H2O = an N-acylethanolamine + a 1,2-diacyl-sn-glycero-3-phosphate + H(+). It catalyses the reaction N-butanoyl-1-hexadecanoyl-2-(9Z,12Z-octadecadienoyl)-sn-glycero-3-phosphoethanolamine + H2O = N-butanoyl ethanolamine + 1-hexadecanoyl-2-(9Z,12Z-octadecadienoyl)-sn-glycero-3-phosphate + H(+). The enzyme catalyses N-hexanoyl-1-hexadecanoyl-2-(9Z,12Z-octadecadienoyl)-sn-glycero-3-phosphoethanolamine + H2O = N-hexanoyl ethanolamine + 1-hexadecanoyl-2-(9Z,12Z-octadecadienoyl)-sn-glycero-3-phosphate + H(+). It carries out the reaction N-octanoyl-1-hexadecanoyl-2-(9Z,12Z-octadecadienoyl)-sn-glycero-3-phosphoethanolamine + H2O = N-octanoyl ethanolamine + 1-hexadecanoyl-2-(9Z,12Z-octadecadienoyl)-sn-glycero-3-phosphate + H(+). The catalysed reaction is N-decanoyl-1-hexadecanoyl-2-(9Z,12Z-octadecadienoyl)-sn-glycero-3-phosphoethanolamine + H2O = N-decanoyl ethanolamine + 1-hexadecanoyl-2-(9Z,12Z-octadecadienoyl)-sn-glycero-3-phosphate + H(+). It catalyses the reaction N-dodecanoyl-1,2-di-(9Z-octadecenoyl)-sn-glycero-3-phosphoethanolamine + H2O = N-dodecanoylethanolamine + 1,2-di-(9Z-octadecenoyl)-sn-glycero-3-phosphate + H(+). The enzyme catalyses N-tetradecanoyl-1,2-di-(9Z-octadecenoyl)-sn-glycero-3-phosphoethanolamine + H2O = N-tetradecanoylethanolamine + 1,2-di-(9Z-octadecenoyl)-sn-glycero-3-phosphate + H(+). It carries out the reaction N-hexadecanoyl-1,2-di-(9Z-octadecenoyl)-sn-glycero-3-phosphoethanolamine + H2O = N-hexadecanoylethanolamine + 1,2-di-(9Z-octadecenoyl)-sn-glycero-3-phosphate + H(+). The catalysed reaction is N,1-dihexadecanoyl-2-(9Z,12Z-octadecadienoyl)-sn-glycero-3-phosphoethanolamine + H2O = 1-hexadecanoyl-2-(9Z,12Z-octadecadienoyl)-sn-glycero-3-phosphate + N-hexadecanoylethanolamine + H(+). It catalyses the reaction N-octadecanoyl-1,2-di-(9Z-octadecenoyl)-sn-glycero-3-phosphoethanolamine + H2O = N-octadecanoyl ethanolamine + 1,2-di-(9Z-octadecenoyl)-sn-glycero-3-phosphate + H(+). The enzyme catalyses N,1,2-tri-(9Z-octadecenoyl)-sn-glycero-3-phosphoethanolamine + H2O = N-(9Z-octadecenoyl) ethanolamine + 1,2-di-(9Z-octadecenoyl)-sn-glycero-3-phosphate + H(+). It carries out the reaction N-(5Z,8Z,11Z,14Z-eicosatetraenoyl)-1,2-diacyl-sn-glycero-3-phosphoethanolamine + H2O = N-(5Z,8Z,11Z,14Z-eicosatetraenoyl)-ethanolamine + a 1,2-diacyl-sn-glycero-3-phosphate + H(+). The catalysed reaction is N-(5Z,8Z,11Z,14Z-eicosatetraenoyl)-1,2-di-(9Z-octadecenoyl)-sn-glycero-3-phosphoethanolamine + H2O = N-(5Z,8Z,11Z,14Z-eicosatetraenoyl)-ethanolamine + 1,2-di-(9Z-octadecenoyl)-sn-glycero-3-phosphate + H(+). It catalyses the reaction 1-O-(1Z-octadecenoyl)-2-(9Z-octadecenoyl)-sn-glycero-3-phospho-N-hexadecanoyl-ethanolamine + H2O = 1-O-(1Z-octadecenoyl)-2-(9Z-octadecenoyl)-sn-glycero-3-phosphate + N-hexadecanoylethanolamine + H(+). The enzyme catalyses N,1-diacyl-sn-glycero-3-phosphoethanolamine + H2O = an N-acylethanolamine + a 1-acyl-sn-glycero-3-phosphate + H(+). It carries out the reaction N,1-dihexadecanoyl-sn-glycero-3-phosphoethanolamine + H2O = N-hexadecanoylethanolamine + 1-hexadecanoyl-sn-glycero-3-phosphate + H(+). The catalysed reaction is N-(5Z,8Z,11Z,14Z-eicosatetraenoyl)-1-(9Z-octadecenoyl)-sn-glycero-3-phosphoethanolamine + H2O = N-(5Z,8Z,11Z,14Z-eicosatetraenoyl)-ethanolamine + 1-(9Z-octadecenoyl)-sn-glycero-3-phosphate + H(+). Its activity is regulated as follows. Activated by divalent cations. Activated by bile acids and their conjugates, except for lithocholic acid which is rather inhibitory. Binding of deoxycholic acid favors the selective release of anandamide and likely other unsatured long FAEs. Inhibited by phosphatidylethanolamines. Functionally, D-type phospholipase that hydrolyzes N-acyl-phosphatidylethanolamines (NAPEs) to produce bioactive N-acylethanolamines/fatty acid ethanolamides (NAEs/FAEs) and phosphatidic acid. Cleaves the terminal phosphodiester bond of diacyl- and alkenylacyl-NAPEs, primarily playing a role in the generation of long-chain saturated and monounsaturated NAEs in the brain. May control NAPE homeostasis in dopaminergic neuron membranes and regulate neuron survival, partly through RAC1 activation. As a regulator of lipid metabolism in the adipose tissue, mediates the crosstalk between adipocytes, gut microbiota and immune cells to control body temperature and weight. In particular, regulates energy homeostasis by promoting cold-induced brown or beige adipocyte differentiation program to generate heat from fatty acids and glucose. Has limited D-type phospholipase activity toward N-acyl lyso-NAPEs. The sequence is that of N-acyl-phosphatidylethanolamine-hydrolyzing phospholipase D (NAPEPLD) from Homo sapiens (Human).